Consider the following 500-residue polypeptide: Probable cytosol aminopeptidase (500 aa).

Residues K264 and D269 each coordinate Mn(2+). K276 is a catalytic residue. Mn(2+)-binding residues include D287, D346, and E348. R350 is an active-site residue.

Belongs to the peptidase M17 family. Mn(2+) serves as cofactor.

Its subcellular location is the cytoplasm. The catalysed reaction is Release of an N-terminal amino acid, Xaa-|-Yaa-, in which Xaa is preferably Leu, but may be other amino acids including Pro although not Arg or Lys, and Yaa may be Pro. Amino acid amides and methyl esters are also readily hydrolyzed, but rates on arylamides are exceedingly low.. The enzyme catalyses Release of an N-terminal amino acid, preferentially leucine, but not glutamic or aspartic acids.. In terms of biological role, presumably involved in the processing and regular turnover of intracellular proteins. Catalyzes the removal of unsubstituted N-terminal amino acids from various peptides. The protein is Probable cytosol aminopeptidase of Nitrobacter winogradskyi (strain ATCC 25391 / DSM 10237 / CIP 104748 / NCIMB 11846 / Nb-255).